Reading from the N-terminus, the 2084-residue chain is MAP kinase-activating death domain protein (2084 aa).

One can recognise a uDENN domain in the interval threonine 25–glutamate 352. Residues proline 117–lysine 253 are disordered. Residues serine 118–proline 131 show a composition bias toward low complexity. Over residues glycine 132 to arginine 152 the composition is skewed to gly residues. Residues phenylalanine 160–serine 173 are compositionally biased toward basic and acidic residues. Low complexity predominate over residues aspartate 174–serine 183. Basic and acidic residues predominate over residues aspartate 189 to arginine 204. Positions leucine 205 to histidine 215 are enriched in basic residues. Residues aspartate 234 to proline 245 show a composition bias toward polar residues. In terms of domain architecture, cDENN spans arginine 373–lysine 514. In terms of domain architecture, dDENN spans alanine 516–alanine 678. 7 disordered regions span residues threonine 557–alanine 588, glutamine 730–tyrosine 749, valine 811–serine 863, glutamine 891–serine 963, histidine 1058–phenylalanine 1092, phenylalanine 1115–glutamine 1188, and serine 1305–threonine 1382. Residues proline 558 to alanine 588 are compositionally biased toward polar residues. The segment covering serine 824 to serine 839 has biased composition (low complexity). The segment covering histidine 913–isoleucine 925 has biased composition (basic and acidic residues). A compositionally biased stretch (low complexity) spans glycine 946 to serine 963. Residues glutamine 1121–proline 1131 are compositionally biased toward low complexity. The segment covering threonine 1168–serine 1183 has biased composition (basic and acidic residues). A compositionally biased stretch (low complexity) spans serine 1305 to serine 1315. Polar residues-rich tracts occupy residues arginine 1324–leucine 1353 and arginine 1370–threonine 1382. The region spanning glycine 1490 to asparagine 1565 is the Death domain. The segment covering aspartate 1794–alanine 1842 has biased composition (low complexity). 2 disordered regions span residues aspartate 1794–valine 1865 and valine 1896–histidine 2084. Residues valine 1845 to serine 1858 show a composition bias toward polar residues. Positions valine 1896–serine 1907 are enriched in pro residues. Residues serine 1921–serine 1932 show a composition bias toward polar residues. 2 stretches are compositionally biased toward pro residues: residues serine 1933–proline 1953 and glutamine 1983–valine 1993. 2 stretches are compositionally biased toward low complexity: residues leucine 2001–serine 2029 and isoleucine 2059–serine 2077.

It belongs to the MADD family.

It is found in the cell membrane. The protein resides in the cytoplasm. Functionally, guanyl-nucleotide exchange factor that regulates small GTPases. Converts GDP-bound inactive form of Rab3 to the GTP-bound active forms. This is MAP kinase-activating death domain protein from Drosophila melanogaster (Fruit fly).